A 306-amino-acid polypeptide reads, in one-letter code: MGMTLPDITSSENVASAAPLKWVGMEGITVPIQVPMSGEVPAYVNAKTDVYVSLDKSDAKGIHMSRLFLKLNDILGTELLSSTSLTALLNELILSQQGLSQGAKVNLDFALTLRKKALLSNEFGYQSYPIGISTQLVKGVARTVLSLTIAYSSTCPCSSALAQQALSDAISQRFDDEMISKSELTQWITSKTGAVATPHSQRSYAYIKLTLDGDALPNLPELITLLETTIGTPVQTAVKRQDEQAFAKLNAENLMFCEDAARRLKRALERKENVLDYWFKVEHQESLHAHNAVAIDFKDNADEDTM.

It belongs to the GTP cyclohydrolase IV family.

The catalysed reaction is GTP + H2O = 7,8-dihydroneopterin 3'-triphosphate + formate + H(+). Its pathway is cofactor biosynthesis; 7,8-dihydroneopterin triphosphate biosynthesis; 7,8-dihydroneopterin triphosphate from GTP: step 1/1. Converts GTP to 7,8-dihydroneopterin triphosphate. The protein is GTP cyclohydrolase FolE2 of Pseudoalteromonas atlantica (strain T6c / ATCC BAA-1087).